We begin with the raw amino-acid sequence, 572 residues long: uncharacterized protein (572 aa).

The next 12 helical transmembrane spans lie at 77–97 (MIAIGGAIGSGLYVGSGSSLS), 102–122 (ASIIINYTLIGIMMFFVVYAL), 145–165 (PAWGFTISWNYFINYFITFPL), 180–200 (INSAAWISIFLVIVIIINLFG), 209–229 (FILSTLKVIATLGFIILAIII), 259–279 (FCSVFTTAAFSFSGTEFIGLA), 297–317 (VFWRIAVFYIVSLTLIGLLIS), 341–361 (ANIKGLPSVFNAVIIISVVSV), 392–412 (LGRPLIAMVVVLLFGFFAYIN), 431–451 (ALAGLSNFFSWGSICLSHIIF), 478–498 (IGLFFNILCLMAQFYVSLFPI), and 507–527 (FFQGYLAACVAIVFFVGYKIY).

This sequence belongs to the amino acid-polyamine-organocation (APC) superfamily.

The protein localises to the membrane. This is an uncharacterized protein from Schizosaccharomyces pombe (strain 972 / ATCC 24843) (Fission yeast).